The chain runs to 197 residues: Imidazoleglycerol-phosphate dehydratase (197 aa).

The protein belongs to the imidazoleglycerol-phosphate dehydratase family.

The protein resides in the cytoplasm. It carries out the reaction D-erythro-1-(imidazol-4-yl)glycerol 3-phosphate = 3-(imidazol-4-yl)-2-oxopropyl phosphate + H2O. Its pathway is amino-acid biosynthesis; L-histidine biosynthesis; L-histidine from 5-phospho-alpha-D-ribose 1-diphosphate: step 6/9. The sequence is that of Imidazoleglycerol-phosphate dehydratase from Alkalilimnicola ehrlichii (strain ATCC BAA-1101 / DSM 17681 / MLHE-1).